A 295-amino-acid polypeptide reads, in one-letter code: Acetaldehyde dehydrogenase (295 aa).

Position 11 to 14 (11 to 14 (SGNI)) interacts with NAD(+). C127 acts as the Acyl-thioester intermediate in catalysis. Residues 158–166 (SAGPGTRSN) and N269 each bind NAD(+).

It belongs to the acetaldehyde dehydrogenase family.

It catalyses the reaction acetaldehyde + NAD(+) + CoA = acetyl-CoA + NADH + H(+). This is Acetaldehyde dehydrogenase from Brevibacillus brevis (strain 47 / JCM 6285 / NBRC 100599).